The primary structure comprises 221 residues: ATP-dependent dethiobiotin synthetase BioD (221 aa).

11 to 16 (DVGKTF) serves as a coordination point for ATP. T15 contacts Mg(2+). The active site involves K35. T39 contributes to the substrate binding site. ATP contacts are provided by residues D44 and 103–106 (EGAG). 2 residues coordinate Mg(2+): D44 and E103.

This sequence belongs to the dethiobiotin synthetase family. As to quaternary structure, homodimer. The cofactor is Mg(2+).

It is found in the cytoplasm. The enzyme catalyses (7R,8S)-7,8-diammoniononanoate + CO2 + ATP = (4R,5S)-dethiobiotin + ADP + phosphate + 3 H(+). The protein operates within cofactor biosynthesis; biotin biosynthesis; biotin from 7,8-diaminononanoate: step 1/2. In terms of biological role, catalyzes a mechanistically unusual reaction, the ATP-dependent insertion of CO2 between the N7 and N8 nitrogen atoms of 7,8-diaminopelargonic acid (DAPA, also called 7,8-diammoniononanoate) to form a ureido ring. This chain is ATP-dependent dethiobiotin synthetase BioD, found in Leptospira interrogans serogroup Icterohaemorrhagiae serovar copenhageni (strain Fiocruz L1-130).